Consider the following 219-residue polypeptide: HTH-type transcriptional activator FasR (219 aa).

The tract at residues 1 to 30 (MSDLANTAERRGEKRPAGGNRRGNRLPRDE) is disordered. The HTH tetR-type domain occupies 29 to 89 (DERRGQLLIA…AVLQRHVDNL (61 aa)). Positions 52–71 (GMDEIADRAGVSKPVLYQHF) form a DNA-binding region, H-T-H motif.

In terms of assembly, homodimer.

With respect to regulation, fasR:DNA binding is regulated by long-chain acyl-CoAs (C14- to C26-CoA), which act as effector molecules that modulate the affinity of FasR for its DNA binding sequences and therefore modulate the expression of the essential fas-acpS operon. Functionally, transcriptional activator that plays a central role in sensing mycobacterial long-chain fatty acids and regulating lipid biosynthesis. Activates the expression of the genes encoding the fatty acid synthase (fas) and the 4-phosphopantetheinyl transferase (acpS), whose products are involved in the fatty acid and mycolic acid biosynthesis. Specifically binds to three conserved operator sequences present in the fas-acpS promoter region. Essential for M.smegmatis viability. In Mycolicibacterium smegmatis (strain ATCC 700084 / mc(2)155) (Mycobacterium smegmatis), this protein is HTH-type transcriptional activator FasR.